A 116-amino-acid chain; its full sequence is Fluoride-specific ion channel FluC 1 (116 aa).

4 helical membrane-spanning segments follow: residues 1-21 (MYAP…RYLV), 32-52 (FPLG…WLAG), 54-74 (GAAD…FTTF), and 93-113 (VVVY…LGYH). Na(+) is bound by residues Gly-69 and Thr-72.

Belongs to the fluoride channel Fluc/FEX (TC 1.A.43) family.

It localises to the cell membrane. It catalyses the reaction fluoride(in) = fluoride(out). With respect to regulation, na(+) is not transported, but it plays an essential structural role and its presence is essential for fluoride channel function. Functionally, fluoride-specific ion channel. Important for reducing fluoride concentration in the cell, thus reducing its toxicity. This Geobacillus kaustophilus (strain HTA426) protein is Fluoride-specific ion channel FluC 1.